An 81-amino-acid chain; its full sequence is MSTSAQPARRPFFRRRKTCPFSGANAPKIDYKDVKLLQRYISERGKIVPSRITAVSAKKQRELARAIKRARFLALIPYVIS.

Belongs to the bacterial ribosomal protein bS18 family. As to quaternary structure, part of the 30S ribosomal subunit. Forms a tight heterodimer with protein bS6.

In terms of biological role, binds as a heterodimer with protein bS6 to the central domain of the 16S rRNA, where it helps stabilize the platform of the 30S subunit. The polypeptide is Small ribosomal subunit protein bS18 (Parvibaculum lavamentivorans (strain DS-1 / DSM 13023 / NCIMB 13966)).